Reading from the N-terminus, the 95-residue chain is Cell division topological specificity factor (95 aa).

This sequence belongs to the MinE family.

Prevents the cell division inhibition by proteins MinC and MinD at internal division sites while permitting inhibition at polar sites. This ensures cell division at the proper site by restricting the formation of a division septum at the midpoint of the long axis of the cell. This chain is Cell division topological specificity factor, found in Synechococcus sp. (strain CC9902).